A 293-amino-acid polypeptide reads, in one-letter code: MKI67 FHA domain-interacting nucleolar phosphoprotein (293 aa).

Position 2 is an N-acetylalanine (alanine 2). Residue lysine 38 forms a Glycyl lysine isopeptide (Lys-Gly) (interchain with G-Cter in SUMO2) linkage. One can recognise an RRM domain in the interval glycine 45–proline 123. At arginine 114 the chain carries Omega-N-methylarginine; by PRMT1 and PRMT8. A Glycyl lysine isopeptide (Lys-Gly) (interchain with G-Cter in SUMO2) cross-link involves residue lysine 139. Serine 145 carries the phosphoserine modification. Residues lysine 179 and lysine 192 each participate in a glycyl lysine isopeptide (Lys-Gly) (interchain with G-Cter in SUMO2) cross-link. Positions serine 197–glycine 207 are enriched in polar residues. The segment at serine 197–proline 239 is disordered. The residue at position 218 (serine 218) is a Phosphoserine. Threonine 223 is subject to Phosphothreonine. The segment at lysine 226–cysteine 269 is interaction with MKI67. Serine 230 carries the post-translational modification Phosphoserine. Phosphothreonine occurs at positions 234 and 238. Omega-N-methylated arginine; by PRMT1 and PRMT8 occurs at positions 244 and 245. Phosphoserine is present on serine 247. Lysine 271 is covalently cross-linked (Glycyl lysine isopeptide (Lys-Gly) (interchain with G-Cter in SUMO1); alternate). Lysine 271 participates in a covalent cross-link: Glycyl lysine isopeptide (Lys-Gly) (interchain with G-Cter in SUMO2); alternate. The interval lysine 271–glutamine 293 is disordered. Threonine 279 carries the post-translational modification Phosphothreonine. The span at histidine 282–glutamine 293 shows a compositional bias: basic residues. Arginine 284 carries the omega-N-methylarginine; by PRMT1 and PRMT8 modification.

In terms of assembly, binds to the FHA domain of MKI67; this interaction is enhanced in mitosis. Sequentially phosphorylated on Thr-238, Thr-234 and Ser-230. Thr-234 is phosphorylated only when Thr-238 is phosphorylated. Likewise, phosphorylation at Ser-230 requires that Thr-234 and Thr-238 are phosphorylated. Phosphorylation enhances MKI67 binding.

It is found in the nucleus. The protein localises to the nucleolus. Its subcellular location is the chromosome. This is MKI67 FHA domain-interacting nucleolar phosphoprotein (NIFK) from Homo sapiens (Human).